Here is a 250-residue protein sequence, read N- to C-terminus: Small ribosomal subunit protein uS2 (250 aa).

Belongs to the universal ribosomal protein uS2 family.

This is Small ribosomal subunit protein uS2 from Paraburkholderia phytofirmans (strain DSM 17436 / LMG 22146 / PsJN) (Burkholderia phytofirmans).